Here is a 338-residue protein sequence, read N- to C-terminus: Fructose-1,6-bisphosphatase class 1 (338 aa).

Residues Glu-92, Asp-115, Leu-117, and Asp-118 each coordinate Mg(2+). Substrate is bound by residues 118–121 (DGSS), Asn-211, Tyr-244, 262–264 (YLY), and Lys-274. Position 280 (Glu-280) interacts with Mg(2+).

It belongs to the FBPase class 1 family. Homotetramer. Requires Mg(2+) as cofactor.

The protein localises to the cytoplasm. It carries out the reaction beta-D-fructose 1,6-bisphosphate + H2O = beta-D-fructose 6-phosphate + phosphate. The protein operates within carbohydrate biosynthesis; gluconeogenesis. In Vibrio parahaemolyticus serotype O3:K6 (strain RIMD 2210633), this protein is Fructose-1,6-bisphosphatase class 1.